A 116-amino-acid polypeptide reads, in one-letter code: MADLLKFVQNEFVAKKDFPDFGAGDTITVFYEIKEGEKTRTQFFKGVVIQRRGSGTTETFTIRKMSGAIGVERIFPVNLPALQKIEINKKGAVRRARIFYFRELTGKKAKIKDKRR.

The protein belongs to the bacterial ribosomal protein bL19 family.

Its function is as follows. This protein is located at the 30S-50S ribosomal subunit interface and may play a role in the structure and function of the aminoacyl-tRNA binding site. This is Large ribosomal subunit protein bL19 from Flavobacterium johnsoniae (strain ATCC 17061 / DSM 2064 / JCM 8514 / BCRC 14874 / CCUG 350202 / NBRC 14942 / NCIMB 11054 / UW101) (Cytophaga johnsonae).